The primary structure comprises 426 residues: Glucose-1-phosphate adenylyltransferase (426 aa).

Residues Gly165, 180-181 (EK), and Ser191 contribute to the alpha-D-glucose 1-phosphate site.

Belongs to the bacterial/plant glucose-1-phosphate adenylyltransferase family. As to quaternary structure, homotetramer.

It carries out the reaction alpha-D-glucose 1-phosphate + ATP + H(+) = ADP-alpha-D-glucose + diphosphate. The protein operates within glycan biosynthesis; glycogen biosynthesis. In terms of biological role, involved in the biosynthesis of ADP-glucose, a building block required for the elongation reactions to produce glycogen. Catalyzes the reaction between ATP and alpha-D-glucose 1-phosphate (G1P) to produce pyrophosphate and ADP-Glc. The protein is Glucose-1-phosphate adenylyltransferase of Ruminiclostridium cellulolyticum (strain ATCC 35319 / DSM 5812 / JCM 6584 / H10) (Clostridium cellulolyticum).